A 202-amino-acid polypeptide reads, in one-letter code: Probable nicotinate-nucleotide adenylyltransferase (202 aa).

Belongs to the NadD family.

The enzyme catalyses nicotinate beta-D-ribonucleotide + ATP + H(+) = deamido-NAD(+) + diphosphate. The protein operates within cofactor biosynthesis; NAD(+) biosynthesis; deamido-NAD(+) from nicotinate D-ribonucleotide: step 1/1. Catalyzes the reversible adenylation of nicotinate mononucleotide (NaMN) to nicotinic acid adenine dinucleotide (NaAD). The chain is Probable nicotinate-nucleotide adenylyltransferase from Clostridium perfringens (strain SM101 / Type A).